We begin with the raw amino-acid sequence, 70 residues long: MKKDIHPKYEEITATCSCGNVMKINSTAGHNLNLDVCDKCHPFYTGKQRDVATGGRVDLFNKRFKIPGSK.

Residues Cys-16, Cys-18, Cys-37, and Cys-40 each coordinate Zn(2+).

This sequence belongs to the bacterial ribosomal protein bL31 family. Type A subfamily. Part of the 50S ribosomal subunit. Zn(2+) serves as cofactor.

Binds the 23S rRNA. The sequence is that of Large ribosomal subunit protein bL31 from Proteus mirabilis (strain HI4320).